The chain runs to 811 residues: Protein MEI2-like 5 (811 aa).

RRM domains are found at residues 193 to 266 (RTLF…YSIP) and 278 to 351 (GTLV…PSRP). The segment at 371–397 (TKHNSFQIGSPSANSPPSLWSQLGSPT) is disordered. Polar residues predominate over residues 374–397 (NSFQIGSPSANSPPSLWSQLGSPT).

Its function is as follows. Probable RNA-binding protein that may play a role in growth regulation. The sequence is that of Protein MEI2-like 5 (ML5) from Oryza sativa subsp. japonica (Rice).